A 403-amino-acid chain; its full sequence is Peptidyl-prolyl cis-trans isomerase FKBP8 (403 aa).

The disordered stretch occupies residues 26–54 (VLDGVDDAEEEDDLSGLPPLEDMGQPTVE). Residues 28 to 39 (DGVDDAEEEDDL) are compositionally biased toward acidic residues. The PPIase FKBP-type domain occupies 110–195 (GQVVTVHLQM…CLEVTLKTAE (86 aa)). One copy of the TPR 1 repeat lies at 212–245 (ANRKRECGNAHYQRADFVLAANSYDLAIKAITSN). Residues lysine 240, lysine 262, lysine 264, and lysine 275 each participate in a glycyl lysine isopeptide (Lys-Gly) (interchain with G-Cter in ubiquitin) cross-link. TPR repeat units lie at residues 263-296 (VKCL…QPDN) and 297-330 (IKAL…EPSN). Serine 287 bears the Phosphoserine mark. Glycyl lysine isopeptide (Lys-Gly) (interchain with G-Cter in ubiquitin) cross-links involve residues lysine 298, lysine 305, lysine 325, lysine 331, lysine 339, lysine 342, and lysine 343. Residues 381–401 (WLFGATAVALGGVALSVVIAA) form a helical membrane-spanning segment.

Homomultimers or heteromultimers (Potential). Forms heterodimer with calmodulin. When activated by calmodulin and calcium, interacts with the BH4 domain of BCL2 and weakly with BCLX isoform Bcl-X(L). Does not bind and inhibit calcineurin. Interacts with ZFYVE27; may negatively regulate ZFYVE27 phosphorylation. It depends on Ca(2+) as a cofactor. In terms of processing, ubiquitinated by PRKN during mitophagy, leading to its degradation and enhancement of mitophagy. Deubiquitinated by USP30.

Its subcellular location is the mitochondrion membrane. It carries out the reaction [protein]-peptidylproline (omega=180) = [protein]-peptidylproline (omega=0). In terms of biological role, constitutively inactive PPiase, which becomes active when bound to calmodulin and calcium. Seems to act as a chaperone for BCL2, targets it to the mitochondria and modulates its phosphorylation state. The BCL2/FKBP8/calmodulin/calcium complex probably interferes with the binding of BCL2 to its targets. The active form of FKBP8 may therefore play a role in the regulation of apoptosis. This chain is Peptidyl-prolyl cis-trans isomerase FKBP8 (Fkbp8), found in Rattus norvegicus (Rat).